An 853-amino-acid polypeptide reads, in one-letter code: Thrombospondin type-1 domain-containing protein 1 (853 aa).

The signal sequence occupies residues 1–24 (MKPMLKDFSNLLLVVLCDYVLGEA). The Extracellular segment spans residues 25-414 (EYLLLREPGH…QPQGPVKSNN (390 aa)). Residues Asn39, Asn53, Asn58, Asn69, Asn80, Asn135, and Asn304 are each glycosylated (N-linked (GlcNAc...) asparagine). Residues 341 to 394 (IETWGLWQPWSQCSATCGDGVRERRRVCLTSFPSRPGCPGMSLEASLCSLEECA) enclose the TSP type-1 domain. Disulfide bonds link Cys353/Cys388, Cys357/Cys393, and Cys368/Cys378. A helical transmembrane segment spans residues 415-435 (IVTVTGISLCLFIIIATVLIT). At 436–853 (LWRRFGRPAK…STLSVEKLVI (418 aa)) the chain is on the cytoplasmic side. Disordered regions lie at residues 445-518 (KCST…ESFQ), 624-650 (TLIR…RNAH), 668-702 (ERSM…QSRG), and 714-800 (QEAS…RKDK). Phosphoserine is present on Ser464. Positions 671 to 686 (MSTLTPRQAPAYSTRT) are enriched in polar residues. A compositionally biased stretch (basic and acidic residues) spans 687–697 (RTCEQAEDRFR). Positions 767–795 (SHKSVSRKQSSPTSPKDSYQRVSPLSPSQ) are enriched in polar residues.

Part of a complex composed of THSD1, PTK2/FAK1, TLN1 and VCL. Interacts with TLN1.

Its subcellular location is the endosome membrane. It localises to the cell junction. It is found in the focal adhesion. Is a positive regulator of nascent focal adhesion assembly, involved in the modulation of endothelial cell attachment to the extracellular matrix. This chain is Thrombospondin type-1 domain-containing protein 1 (THSD1), found in Pongo abelii (Sumatran orangutan).